Consider the following 832-residue polypeptide: Protein P (832 aa).

The terminal protein domain (TP) stretch occupies residues 1–177; sequence MPLSYQHFRR…FCGSPYSWEQ (177 aa). The spacer stretch occupies residues 178–335; it reads ELQHGAESFH…YCLSHIVNLL (158 aa). A disordered region spans residues 241-263; that stretch reads RRPFGVEPSGSGHTTNLASKSAS. Over residues 251–263 the composition is skewed to polar residues; it reads SGHTTNLASKSAS. The segment at 336–679 is polymerase/reverse transcriptase domain (RT); the sequence is EDWGPCAEHG…YLNLYPVARQ (344 aa). The region spanning 346–589 is the Reverse transcriptase domain; the sequence is EHHIRIPRTP…YSLHFMGYVI (244 aa). Aspartate 418, aspartate 540, and aspartate 541 together coordinate Mg(2+).

It belongs to the hepadnaviridae P protein family.

It carries out the reaction DNA(n) + a 2'-deoxyribonucleoside 5'-triphosphate = DNA(n+1) + diphosphate. The enzyme catalyses Endonucleolytic cleavage to 5'-phosphomonoester.. With respect to regulation, activated by host HSP70 and HSP40 in vitro to be able to bind the epsilon loop of the pgRNA. Because deletion of the RNase H region renders the protein partly chaperone-independent, the chaperones may be needed indirectly to relieve occlusion of the RNA-binding site by this domain. Inhibited by several reverse-transcriptase inhibitors: Lamivudine, Adefovir and Entecavir. Multifunctional enzyme that converts the viral RNA genome into dsDNA in viral cytoplasmic capsids. This enzyme displays a DNA polymerase activity that can copy either DNA or RNA templates, and a ribonuclease H (RNase H) activity that cleaves the RNA strand of RNA-DNA heteroduplexes in a partially processive 3'- to 5'-endonucleasic mode. Neo-synthesized pregenomic RNA (pgRNA) are encapsidated together with the P protein, and reverse-transcribed inside the nucleocapsid. Initiation of reverse-transcription occurs first by binding the epsilon loop on the pgRNA genome, and is initiated by protein priming, thereby the 5'-end of (-)DNA is covalently linked to P protein. Partial (+)DNA is synthesized from the (-)DNA template and generates the relaxed circular DNA (RC-DNA) genome. After budding and infection, the RC-DNA migrates in the nucleus, and is converted into a plasmid-like covalently closed circular DNA (cccDNA). The activity of P protein does not seem to be necessary for cccDNA generation, and is presumably released from (+)DNA by host nuclear DNA repair machinery. This Homo sapiens (Human) protein is Protein P.